A 258-amino-acid chain; its full sequence is Imidazole glycerol phosphate synthase subunit HisF (258 aa).

Residues aspartate 11 and aspartate 130 contribute to the active site.

This sequence belongs to the HisA/HisF family. As to quaternary structure, heterodimer of HisH and HisF.

It localises to the cytoplasm. It carries out the reaction 5-[(5-phospho-1-deoxy-D-ribulos-1-ylimino)methylamino]-1-(5-phospho-beta-D-ribosyl)imidazole-4-carboxamide + L-glutamine = D-erythro-1-(imidazol-4-yl)glycerol 3-phosphate + 5-amino-1-(5-phospho-beta-D-ribosyl)imidazole-4-carboxamide + L-glutamate + H(+). The protein operates within amino-acid biosynthesis; L-histidine biosynthesis; L-histidine from 5-phospho-alpha-D-ribose 1-diphosphate: step 5/9. Its function is as follows. IGPS catalyzes the conversion of PRFAR and glutamine to IGP, AICAR and glutamate. The HisF subunit catalyzes the cyclization activity that produces IGP and AICAR from PRFAR using the ammonia provided by the HisH subunit. In Xanthomonas campestris pv. campestris (strain 8004), this protein is Imidazole glycerol phosphate synthase subunit HisF.